Here is a 493-residue protein sequence, read N- to C-terminus: MSFKDLRSFIDHLEKNGELKRISYPVDPHLEMTEIADRVLRSGGPALLFENPTNHTMPVLVNLFGTPKRVAMALGKDDPLALREVGELLAFLKEPEPPTGFKDAIAKIPMYKQALNMPPKTVRNPPCQQVVKTGDEVDLTSLPIQHCWPGDVAPLVTWGLTITKGPRQKRQNLGIYRQQLLSKNKLIMRWLDHRGGALDFKDFKQLHPGERYPVVVALGSDPVTILGAVTPVPDSMSEYAFAGLLRGERTEVCKAISCDLEVPATSEIILEGYIDPEETAVEGPYGDHTGYYNETDSFPVFTVTHITHRKDAIYHSTYTGRPPDEPAMLGVALNEVFVPILRKQYPEIIDFYLPPEGCSYRMAVISIRKQYPGHAKRVMMGAWSFLRQFMYTKFIVVVDDDVNCRDWQDVIWAITTRMDPIRDTMMVDNTPIDYLDFASPVAGLGSKMGLDATNKWPGETTREWGTPIVMDEKTKQRIDQIWDDLGIQDMPTL.

N172 is a binding site for Mn(2+). Residues 175 to 177, 189 to 191, and 194 to 195 contribute to the prenylated FMN site; these read IYR, RWL, and RG. E238 contributes to the Mn(2+) binding site. The Proton donor role is filled by D287.

This sequence belongs to the UbiD family. Homohexamer. It depends on prenylated FMN as a cofactor. Mn(2+) is required as a cofactor.

Its subcellular location is the cell membrane. The catalysed reaction is a 4-hydroxy-3-(all-trans-polyprenyl)benzoate + H(+) = a 2-(all-trans-polyprenyl)phenol + CO2. It participates in cofactor biosynthesis; ubiquinone biosynthesis. Functionally, catalyzes the decarboxylation of 3-octaprenyl-4-hydroxy benzoate to 2-octaprenylphenol, an intermediate step in ubiquinone biosynthesis. This is 3-octaprenyl-4-hydroxybenzoate carboxy-lyase from Shewanella frigidimarina (strain NCIMB 400).